The sequence spans 37 residues: MIEPLLCGIVLGLIPVTLLGLFVAAWNQYRRGSALGG.

A helical transmembrane segment spans residues 5–25 (LLCGIVLGLIPVTLLGLFVAA).

It belongs to the PetG family. In terms of assembly, the 4 large subunits of the cytochrome b6-f complex are cytochrome b6, subunit IV (17 kDa polypeptide, PetD), cytochrome f and the Rieske protein, while the 4 small subunits are PetG, PetL, PetM and PetN. The complex functions as a dimer.

Its subcellular location is the cellular thylakoid membrane. In terms of biological role, component of the cytochrome b6-f complex, which mediates electron transfer between photosystem II (PSII) and photosystem I (PSI), cyclic electron flow around PSI, and state transitions. PetG is required for either the stability or assembly of the cytochrome b6-f complex. The protein is Cytochrome b6-f complex subunit 5 of Synechococcus sp. (strain WH7803).